Here is a 340-residue protein sequence, read N- to C-terminus: Probable ribonucleoside hydrolase (340 aa).

Aspartate 14 is a binding site for Ca(2+). Aspartate 18 contributes to the substrate binding site. The Ca(2+) site is built by aspartate 19 and threonine 139. Substrate-binding residues include asparagine 172, glutamate 178, and asparagine 180. The Proton donor role is filled by histidine 259. Aspartate 260 contributes to the Ca(2+) binding site.

The protein belongs to the IUNH family. Requires Ca(2+) as cofactor.

It carries out the reaction a purine D-ribonucleoside + H2O = a purine nucleobase + D-ribose. The catalysed reaction is a pyrimidine ribonucleoside + H2O = a pyrimidine nucleobase + D-ribose. It participates in purine metabolism; purine nucleoside salvage. In terms of biological role, catalyzes the hydrolysis of the N-glycosidic bond of purine and/or pyrimidine nucleosides into ribose and the base. The chain is Probable ribonucleoside hydrolase (iunH) from Dictyostelium discoideum (Social amoeba).